The sequence spans 228 residues: Cytidylate kinase (228 aa).

17-25 (GPTASGKGT) provides a ligand contact to ATP.

Belongs to the cytidylate kinase family. Type 1 subfamily.

The protein localises to the cytoplasm. It catalyses the reaction CMP + ATP = CDP + ADP. The enzyme catalyses dCMP + ATP = dCDP + ADP. The polypeptide is Cytidylate kinase (Burkholderia multivorans (strain ATCC 17616 / 249)).